The sequence spans 189 residues: HGPRTase-like protein (189 aa).

This sequence belongs to the purine/pyrimidine phosphoribosyltransferase family. Archaeal HPRT subfamily.

Functionally, may catalyze a purine salvage reaction, the substrate is unknown. The polypeptide is HGPRTase-like protein (Halorhabdus utahensis (strain DSM 12940 / JCM 11049 / AX-2)).